The sequence spans 405 residues: Cytochrome P450 130 (405 aa).

Residues Asp-93 and His-97 each contribute to the substrate site. Residues Arg-101, Gly-243, Arg-295, Tyr-318, Ser-348, His-352, and Cys-354 each coordinate heme.

The protein belongs to the cytochrome P450 family. As to quaternary structure, homodimer. The cofactor is heme.

In Mycobacterium tuberculosis (strain CDC 1551 / Oshkosh), this protein is Cytochrome P450 130 (cyp130).